Consider the following 633-residue polypeptide: Guanylate-binding protein 6 (633 aa).

The GTPase domain (Globular) stretch occupies residues 1-310; sequence MESGPKMLAP…EAINSGAVPC (310 aa). The GB1/RHD3-type G domain maps to 35–277; the sequence is SQPVVVVAIV…FCSYIFTHAR (243 aa). GTP contacts are provided by residues 45-52, 67-69, and 97-101; these read GLYRTGKS, LGS, and DTEGL.

Belongs to the TRAFAC class dynamin-like GTPase superfamily. GB1/RHD3 GTPase family. GB1 subfamily. Post-translationally, (Microbial infection) Ubiquitinated by S.flexneri IpaH9.8, leading to its degradation by the proteasome, thereby preventing its ability to promote host defense against bacterial infection.

The protein localises to the cytoplasmic vesicle. The enzyme catalyses GTP + H2O = GDP + phosphate + H(+). Functionally, interferon (IFN)-inducible GTPase that plays important roles in innate immunity against a diverse range of bacterial, viral and protozoan pathogens, such as bacterial pathogens Listeria monocytogenes and Mycobacterium bovis BCG as well as the protozoan pathogen Toxoplasma gondii. Confers protection to several pathogens, including the bacterial pathogens Listeria monocytogenes and Mycobacterium bovis BCG as well as the protozoan pathogen Toxoplasma gondii. The chain is Guanylate-binding protein 6 (GBP6) from Homo sapiens (Human).